The sequence spans 72 residues: Translation initiation factor IF-1 (72 aa).

In terms of domain architecture, S1-like spans 1–72; the sequence is MAKDDVIEVE…TRGRITYRYK (72 aa). Y60 carries the post-translational modification Phosphotyrosine.

The protein belongs to the IF-1 family. In terms of assembly, component of the 30S ribosomal translation pre-initiation complex which assembles on the 30S ribosome in the order IF-2 and IF-3, IF-1 and N-formylmethionyl-tRNA(fMet); mRNA recruitment can occur at any time during PIC assembly.

The protein resides in the cytoplasm. Its function is as follows. One of the essential components for the initiation of protein synthesis. Stabilizes the binding of IF-2 and IF-3 on the 30S subunit to which N-formylmethionyl-tRNA(fMet) subsequently binds. Helps modulate mRNA selection, yielding the 30S pre-initiation complex (PIC). Upon addition of the 50S ribosomal subunit IF-1, IF-2 and IF-3 are released leaving the mature 70S translation initiation complex. In Bacillus licheniformis (strain ATCC 14580 / DSM 13 / JCM 2505 / CCUG 7422 / NBRC 12200 / NCIMB 9375 / NCTC 10341 / NRRL NRS-1264 / Gibson 46), this protein is Translation initiation factor IF-1.